The primary structure comprises 88 residues: Cell division topological specificity factor (88 aa).

The protein belongs to the MinE family.

Its function is as follows. Prevents the cell division inhibition by proteins MinC and MinD at internal division sites while permitting inhibition at polar sites. This ensures cell division at the proper site by restricting the formation of a division septum at the midpoint of the long axis of the cell. In Aeromonas hydrophila subsp. hydrophila (strain ATCC 7966 / DSM 30187 / BCRC 13018 / CCUG 14551 / JCM 1027 / KCTC 2358 / NCIMB 9240 / NCTC 8049), this protein is Cell division topological specificity factor.